A 698-amino-acid chain; its full sequence is Elongation factor G 1 (698 aa).

The 283-residue stretch at Glu-8 to Val-290 folds into the tr-type G domain. GTP-binding positions include Ala-17–Thr-24, Asp-88–His-92, and Asn-142–Asp-145.

The protein belongs to the TRAFAC class translation factor GTPase superfamily. Classic translation factor GTPase family. EF-G/EF-2 subfamily.

It is found in the cytoplasm. Functionally, catalyzes the GTP-dependent ribosomal translocation step during translation elongation. During this step, the ribosome changes from the pre-translocational (PRE) to the post-translocational (POST) state as the newly formed A-site-bound peptidyl-tRNA and P-site-bound deacylated tRNA move to the P and E sites, respectively. Catalyzes the coordinated movement of the two tRNA molecules, the mRNA and conformational changes in the ribosome. The protein is Elongation factor G 1 of Shewanella oneidensis (strain ATCC 700550 / JCM 31522 / CIP 106686 / LMG 19005 / NCIMB 14063 / MR-1).